Consider the following 295-residue polypeptide: Protoheme IX farnesyltransferase (295 aa).

The next 9 helical transmembrane spans lie at 24 to 43 (IMYLVVFTAVAGMVAAPGSI), 47 to 69 (LALISLICIALGSGSAGAINMWY), 94 to 114 (SALEFGVTIGVLSVFIMAIAV), 117 to 137 (ISAILLAIGILFYIFIYTIWL), 144 to 164 (NIVIGGASGAFPPVIGWAVVT), 171 to 191 (GFVLFLIIFMWTPPHFWALSL), 216 to 236 (KYILVYSVLLVLTSLLPALFL), 241 to 261 (FYLGMAIFGGCIFIWHAVSIM), and 272 to 292 (MFSYSISYLFFLFASIILCSI).

Belongs to the UbiA prenyltransferase family. Protoheme IX farnesyltransferase subfamily.

The protein resides in the cell membrane. The enzyme catalyses heme b + (2E,6E)-farnesyl diphosphate + H2O = Fe(II)-heme o + diphosphate. It functions in the pathway porphyrin-containing compound metabolism; heme O biosynthesis; heme O from protoheme: step 1/1. Its function is as follows. Converts heme B (protoheme IX) to heme O by substitution of the vinyl group on carbon 2 of heme B porphyrin ring with a hydroxyethyl farnesyl side group. In Wolbachia sp. subsp. Brugia malayi (strain TRS), this protein is Protoheme IX farnesyltransferase.